We begin with the raw amino-acid sequence, 44 residues long: Thymosin beta (44 aa).

The segment covering 1-17 (MSDKPDVKEVESFDKTT) has biased composition (basic and acidic residues). A disordered region spans residues 1-44 (MSDKPDVKEVESFDKTTLKKTTTNEKNTLPTKEVIEQEKSGGSD). The span at 19 to 32 (KKTTTNEKNTLPTK) shows a compositional bias: low complexity. Residues 33–44 (EVIEQEKSGGSD) show a composition bias toward basic and acidic residues.

It belongs to the thymosin beta family.

Its subcellular location is the cytoplasm. It is found in the cytoskeleton. Its function is as follows. Plays an important role in the organization of the cytoskeleton. Binds to and sequesters actin monomers (G actin) and therefore inhibits actin polymerization. The polypeptide is Thymosin beta (Gillichthys mirabilis (Long-jawed mudsucker)).